The primary structure comprises 258 residues: Type III pantothenate kinase (258 aa).

Position 6–13 (6–13) interacts with ATP; sequence DVGNTNTV. Substrate-binding positions include Tyr100 and 107 to 110; that span reads GADR. Catalysis depends on Asp109, which acts as the Proton acceptor. Asp129 contributes to the K(+) binding site. ATP is bound at residue Thr132. A substrate-binding site is contributed by Thr184.

Belongs to the type III pantothenate kinase family. In terms of assembly, homodimer. Requires NH4(+) as cofactor. K(+) serves as cofactor.

The protein localises to the cytoplasm. It carries out the reaction (R)-pantothenate + ATP = (R)-4'-phosphopantothenate + ADP + H(+). It functions in the pathway cofactor biosynthesis; coenzyme A biosynthesis; CoA from (R)-pantothenate: step 1/5. Its function is as follows. Catalyzes the phosphorylation of pantothenate (Pan), the first step in CoA biosynthesis. This is Type III pantothenate kinase from Geobacillus thermodenitrificans (strain NG80-2).